We begin with the raw amino-acid sequence, 264 residues long: Small ribosomal subunit protein uS2 (264 aa).

The tract at residues 225–264 (GKKAREERQLAAAKDAAGDAKPEAEEAPVAAEAEEAPAAE) is disordered.

This sequence belongs to the universal ribosomal protein uS2 family.

This chain is Small ribosomal subunit protein uS2, found in Corynebacterium glutamicum (strain R).